Here is a 34-residue protein sequence, read N- to C-terminus: Cytochrome b6-f complex subunit 7 (34 aa).

Residues 9–29 traverse the membrane as a helical segment; that stretch reads ALLSFGLIFVGWALGALLLKI.

The protein belongs to the PetM family. As to quaternary structure, the 4 large subunits of the cytochrome b6-f complex are cytochrome b6, subunit IV (17 kDa polypeptide, PetD), cytochrome f and the Rieske protein, while the 4 small subunits are PetG, PetL, PetM and PetN. The complex functions as a dimer.

Its subcellular location is the cellular thylakoid membrane. Functionally, component of the cytochrome b6-f complex, which mediates electron transfer between photosystem II (PSII) and photosystem I (PSI), cyclic electron flow around PSI, and state transitions. The polypeptide is Cytochrome b6-f complex subunit 7 (Nostoc sp. (strain PCC 7120 / SAG 25.82 / UTEX 2576)).